Consider the following 265-residue polypeptide: Phosphonates import ATP-binding protein PhnC 1 (265 aa).

The region spanning 7–252 is the ABC transporter domain; sequence IEVSNLSKSF…KLNEIYGTAA (246 aa). 39-46 contacts ATP; it reads GASGSGKS.

It belongs to the ABC transporter superfamily. Phosphonates importer (TC 3.A.1.9.1) family. In terms of assembly, the complex is composed of two ATP-binding proteins (PhnC), two transmembrane proteins (PhnE) and a solute-binding protein (PhnD).

Its subcellular location is the cell inner membrane. The catalysed reaction is phosphonate(out) + ATP + H2O = phosphonate(in) + ADP + phosphate + H(+). In terms of biological role, part of the ABC transporter complex PhnCDE involved in phosphonates import. Responsible for energy coupling to the transport system. The protein is Phosphonates import ATP-binding protein PhnC 1 of Nostoc sp. (strain PCC 7120 / SAG 25.82 / UTEX 2576).